Reading from the N-terminus, the 177-residue chain is Pyruvate synthase subunit PorC (177 aa).

As to quaternary structure, heterotetramer of one alpha, one beta, one delta and one gamma chain.

It catalyses the reaction 2 oxidized [2Fe-2S]-[ferredoxin] + pyruvate + CoA = 2 reduced [2Fe-2S]-[ferredoxin] + acetyl-CoA + CO2 + H(+). This Methanothermobacter marburgensis (strain ATCC BAA-927 / DSM 2133 / JCM 14651 / NBRC 100331 / OCM 82 / Marburg) (Methanobacterium thermoautotrophicum) protein is Pyruvate synthase subunit PorC (porC).